Reading from the N-terminus, the 443-residue chain is Na(+)-translocating NADH-quinone reductase subunit A (443 aa).

The protein belongs to the NqrA family. Composed of six subunits; NqrA, NqrB, NqrC, NqrD, NqrE and NqrF.

It catalyses the reaction a ubiquinone + n Na(+)(in) + NADH + H(+) = a ubiquinol + n Na(+)(out) + NAD(+). In terms of biological role, NQR complex catalyzes the reduction of ubiquinone-1 to ubiquinol by two successive reactions, coupled with the transport of Na(+) ions from the cytoplasm to the periplasm. NqrA to NqrE are probably involved in the second step, the conversion of ubisemiquinone to ubiquinol. The chain is Na(+)-translocating NADH-quinone reductase subunit A from Actinobacillus succinogenes (strain ATCC 55618 / DSM 22257 / CCUG 43843 / 130Z).